The sequence spans 424 residues: MAKKMSSLIIIFNILLLLTTQTHAHNVTRLLANHPSFSSFSHFLTQTHLADEINRRRTITVCAVDNAAMSALTSKGYTLSTLKNILSLHVLLDYFGTKKLHQIRDGSALAATLFQATGAAPGTSGFVNITDLRGGKVGFGPDGGDLSSFFVKSIEEVPYNISIIQISRVLPSETAAAPTPAPAEMNLTGIMSAHGCKVFAETLLTNPGASKTYQESLEGGMTVFCPGDDAMKGFLPKYKNLTAPKKEAFLDFLAVPTYYSMAMLKSNNGPMNTLATDGANKFELTVQNDGEKVTLKTRINTVKIVDTLIDEQPLAIYATDKVLLPKELFKASAVEAPAPAPAPEDGDVADSPKAAKGKAKGKKKKAAPSPDNDPFGDSDSPAEGPDGEADDATADDAGAVRIIGGAKAGLVVSLLCLFASSWLL.

Residues 1–24 (MAKKMSSLIIIFNILLLLTTQTHA) form the signal peptide. FAS1 domains are found at residues 25 to 170 (HNVT…SRVL) and 184 to 323 (EMNL…DKVL). 5 N-linked (GlcNAc...) asparagine glycosylation sites follow: N26, N128, N160, N186, and N240. Residues 338–393 (APAPAPEDGDVADSPKAAKGKAKGKKKKAAPSPDNDPFGDSDSPAEGPDGEADDAT) are disordered. Residues 355–366 (AKGKAKGKKKKA) are compositionally biased toward basic residues. A lipid anchor (GPI-anchor amidated aspartate) is attached at D396. A propeptide spans 397–424 (AGAVRIIGGAKAGLVVSLLCLFASSWLL) (removed in mature form).

It belongs to the fasciclin-like AGP family. In terms of tissue distribution, preferentially expressed in flowers.

It is found in the secreted. The protein localises to the extracellular space. Its subcellular location is the apoplast. It localises to the cell membrane. May be a cell surface adhesion protein. The sequence is that of Fasciclin-like arabinogalactan protein 1 (FLA1) from Arabidopsis thaliana (Mouse-ear cress).